Consider the following 529-residue polypeptide: Bifunctional purine biosynthesis protein PurH (529 aa).

The MGS-like domain maps to 1-148 (MQQRRPVRRA…KNHKDVAIVV (148 aa)).

The protein belongs to the PurH family.

The enzyme catalyses (6R)-10-formyltetrahydrofolate + 5-amino-1-(5-phospho-beta-D-ribosyl)imidazole-4-carboxamide = 5-formamido-1-(5-phospho-D-ribosyl)imidazole-4-carboxamide + (6S)-5,6,7,8-tetrahydrofolate. It carries out the reaction IMP + H2O = 5-formamido-1-(5-phospho-D-ribosyl)imidazole-4-carboxamide. It participates in purine metabolism; IMP biosynthesis via de novo pathway; 5-formamido-1-(5-phospho-D-ribosyl)imidazole-4-carboxamide from 5-amino-1-(5-phospho-D-ribosyl)imidazole-4-carboxamide (10-formyl THF route): step 1/1. It functions in the pathway purine metabolism; IMP biosynthesis via de novo pathway; IMP from 5-formamido-1-(5-phospho-D-ribosyl)imidazole-4-carboxamide: step 1/1. The chain is Bifunctional purine biosynthesis protein PurH from Salmonella agona (strain SL483).